Here is a 345-residue protein sequence, read N- to C-terminus: Myb/SANT-like DNA-binding domain-containing protein 4 (345 aa).

The 74-residue stretch at 4–77 folds into the Myb-like domain; the sequence is LKRKRKSNFS…EVKRRYLDWR (74 aa). Lys-9 is covalently cross-linked (Glycyl lysine isopeptide (Lys-Gly) (interchain with G-Cter in SUMO2)). Position 106 is a phosphoserine (Ser-106). Glycyl lysine isopeptide (Lys-Gly) (interchain with G-Cter in SUMO2) cross-links involve residues Lys-114 and Lys-142. Positions 139–175 are disordered; the sequence is TEVKVEEEERDPQSPEFEIEEEEEMLSSVIPDSRREN. Thr-188 is subject to Phosphothreonine. Residues 202–344 are a coiled coil; that stretch reads HLLMNIEKQK…RLRIQKEGHL (143 aa). Residues Lys-237, Lys-254, and Lys-273 each participate in a glycyl lysine isopeptide (Lys-Gly) (interchain with G-Cter in SUMO2) cross-link.

This chain is Myb/SANT-like DNA-binding domain-containing protein 4 (Msantd4), found in Mus musculus (Mouse).